Here is a 557-residue protein sequence, read N- to C-terminus: TWiK family of potassium channels protein 7 (557 aa).

2 disordered regions span residues 1–34 (MTSS…EALL) and 128–151 (DKSG…EEEE). Topologically, residues 1-165 (MTSSSRGYQR…RKFAKLVLPH (165 aa)) are cytoplasmic. The span at 134 to 151 (DIDDESDDESKDEDEEEE) shows a compositional bias: acidic residues. A helical membrane pass occupies residues 166 to 186 (VALVLLTCTYTVIGALIFYSV). Residues asparagine 220 and asparagine 237 are each glycosylated (N-linked (GlcNAc...) asparagine). An intramembrane region (pore-forming) is located at residues 270-290 (SIFFAVTVVTTIGYGNPVPVT). Residues 295–315 (IWCILFSLLGIPLTLVTIADL) traverse the membrane as a helical segment. At 316 to 368 (GKFLSEHLVWLYGNYLKLKYLILSRHRKERREHVCEHCHSHGMGHDMNIEEKR) the chain is on the cytoplasmic side. A helical membrane pass occupies residues 369-389 (IPAFLVLAILIVYTAFGGVLM). The segment at residues 397–417 (FFTSFYWSFITMTTVGFGDLM) is an intramembrane region (pore-forming). A helical transmembrane segment spans residues 426–446 (IILLYIILGLAITTMCIDLVG). The Cytoplasmic portion of the chain corresponds to 447 to 557 (VQYIRKIHYF…SRYSLNRAFK (111 aa)).

It belongs to the two pore domain potassium channel (TC 1.A.1.8) family.

It localises to the membrane. The protein is TWiK family of potassium channels protein 7 (twk-7) of Caenorhabditis elegans.